Reading from the N-terminus, the 161-residue chain is Cell division control protein 31 (161 aa).

EF-hand domains lie at 20–55 (EQKQ…LGFE), 56–91 (LPKR…KILK), 93–128 (DPLD…LGET), and 129–161 (LTDE…CTDS). The Ca(2+) site is built by D33, N35, D37, and E44. T130 is subject to Phosphothreonine. Residues D142, D144, D146, E148, and E153 each contribute to the Ca(2+) site.

This sequence belongs to the centrin family. In terms of assembly, component of the spindle pole body (SPB), acting as the connector of microtubule arrays in the cytoplasm and the nucleoplasm, is involved in nuclear positioning before chromosome segregation, SPB separation, spindle formation, chromosome segregation, nuclear migration into the bud, nuclear reorientation after cytokinesis and nuclear fusion during conjugation. The SPB half-bridge, which is tightly associated with the cytoplasmic side of the nuclear envelope and the SPB, is playing a key role as the starting structure for and in the initiation of SPB duplication in G1. At the SPB half-bridge CDC31 interacts with KAR1, MPS3 and SFI1. Interacts with KIC1. Interacts with VPS13. Associates with nuclear pore complexes (NPCs).

It localises to the nucleus envelope. The protein resides in the cytoplasm. It is found in the cytoskeleton. The protein localises to the microtubule organizing center. Its subcellular location is the spindle pole body. Functions as a component of the spindle pole body (SPB) half-bridge. At the SPB, it is recruited by KAR1 and MPS3 to the SPB half-bridge and involved in the initial steps of SPB duplication. Also involved in connection with the protein kinase KIC1 in the maintenance of cell morphology and integrity. May play a role in vesicle-mediated transport, in a VPS13-dependent manner. This is Cell division control protein 31 (CDC31) from Saccharomyces cerevisiae (strain ATCC 204508 / S288c) (Baker's yeast).